Consider the following 117-residue polypeptide: NADH-ubiquinone oxidoreductase chain 3 (117 aa).

A run of 3 helical transmembrane segments spans residues 4-24, 60-80, and 86-106; these read IILI…LASI, ITII…MIII, and IMIW…GLYH.

It belongs to the complex I subunit 3 family.

Its subcellular location is the mitochondrion membrane. The enzyme catalyses a ubiquinone + NADH + 5 H(+)(in) = a ubiquinol + NAD(+) + 4 H(+)(out). Its function is as follows. Core subunit of the mitochondrial membrane respiratory chain NADH dehydrogenase (Complex I) that is believed to belong to the minimal assembly required for catalysis. Complex I functions in the transfer of electrons from NADH to the respiratory chain. The immediate electron acceptor for the enzyme is believed to be ubiquinone. The protein is NADH-ubiquinone oxidoreductase chain 3 (mt:ND3) of Drosophila subobscura (Fruit fly).